Reading from the N-terminus, the 272-residue chain is Thymidine phosphorylase (272 aa).

Belongs to the thymidine/pyrimidine-nucleoside phosphorylase family. As to quaternary structure, homodimer.

It catalyses the reaction thymidine + phosphate = 2-deoxy-alpha-D-ribose 1-phosphate + thymine. The enzymes which catalyze the reversible phosphorolysis of pyrimidine nucleosides are involved in the degradation of these compounds and in their utilization as carbon and energy sources, or in the rescue of pyrimidine bases for nucleotide synthesis. This Metamycoplasma hominis (Mycoplasma hominis) protein is Thymidine phosphorylase (deoA).